The following is a 143-amino-acid chain: Chorion class A protein Ld5 (143 aa).

A signal peptide spans 1–21 (MNSFALLLVCIQACLVQSVFS).

This sequence belongs to the chorion protein family.

In terms of biological role, this protein is one of many from the eggshell of the gypsy moth. This is Chorion class A protein Ld5 from Lymantria dispar (Gypsy moth).